Here is a 265-residue protein sequence, read N- to C-terminus: Auxin-responsive protein IAA22 (265 aa).

2 disordered regions span residues L54 to P88 and D172 to M199. The span at L65–P88 shows a compositional bias: basic and acidic residues. The 104-residue stretch at T91 to D194 folds into the PB1 domain.

The protein belongs to the Aux/IAA family. In terms of assembly, homodimers and heterodimers. In terms of tissue distribution, highly expressed in flowers. Expressed in roots and seedlings.

The protein localises to the nucleus. Functionally, aux/IAA proteins are short-lived transcriptional factors that function as repressors of early auxin response genes at low auxin concentrations. The polypeptide is Auxin-responsive protein IAA22 (IAA22) (Oryza sativa subsp. japonica (Rice)).